Consider the following 496-residue polypeptide: Cobyric acid synthase (496 aa).

Residues 257–447 (KINVAIILLK…MHGILDNPAV (191 aa)) enclose the GATase cobBQ-type domain. Catalysis depends on Cys338, which acts as the Nucleophile. The active site involves His439.

This sequence belongs to the CobB/CobQ family. CobQ subfamily.

It functions in the pathway cofactor biosynthesis; adenosylcobalamin biosynthesis. Functionally, catalyzes amidations at positions B, D, E, and G on adenosylcobyrinic A,C-diamide. NH(2) groups are provided by glutamine, and one molecule of ATP is hydrogenolyzed for each amidation. The polypeptide is Cobyric acid synthase (Parabacteroides distasonis (strain ATCC 8503 / DSM 20701 / CIP 104284 / JCM 5825 / NCTC 11152)).